We begin with the raw amino-acid sequence, 1368 residues long: DNA-directed RNA polymerase subunit beta (1368 aa).

This sequence belongs to the RNA polymerase beta chain family. The RNAP catalytic core consists of 2 alpha, 1 beta, 1 beta' and 1 omega subunit. When a sigma factor is associated with the core the holoenzyme is formed, which can initiate transcription.

It catalyses the reaction RNA(n) + a ribonucleoside 5'-triphosphate = RNA(n+1) + diphosphate. Functionally, DNA-dependent RNA polymerase catalyzes the transcription of DNA into RNA using the four ribonucleoside triphosphates as substrates. This is DNA-directed RNA polymerase subunit beta from Burkholderia multivorans (strain ATCC 17616 / 249).